We begin with the raw amino-acid sequence, 498 residues long: Pyruvate kinase (498 aa).

R53 is a binding site for substrate. Residues N55, S57, D87, and T88 each coordinate K(+). ATP is bound at residue 55–58; the sequence is NFSH. 2 residues coordinate ATP: R94 and K178. A Mg(2+)-binding site is contributed by E240. Positions 263, 264, and 296 each coordinate substrate. D264 contributes to the Mg(2+) binding site.

It belongs to the pyruvate kinase family. In terms of assembly, homotetramer. It depends on Mg(2+) as a cofactor. Requires K(+) as cofactor.

It catalyses the reaction pyruvate + ATP = phosphoenolpyruvate + ADP + H(+). Its pathway is carbohydrate degradation; glycolysis; pyruvate from D-glyceraldehyde 3-phosphate: step 5/5. The polypeptide is Pyruvate kinase (PYK) (Trypanoplasma borreli).